A 150-amino-acid polypeptide reads, in one-letter code: Auxin-binding protein 5 (150 aa).

The signal sequence occupies residues 1-41; it reads MVRRRPATGAAQRPQLAAVGRGLLLASVLAAAASSLPVAES. Residues H98, H100, and E104 each contribute to the Zn(2+) site. N136 carries N-linked (GlcNAc...) asparagine glycosylation. Residue H147 participates in Zn(2+) binding.

In terms of assembly, homodimer.

The protein resides in the endoplasmic reticulum lumen. This is probably a receptor for the plant hormone auxin. The polypeptide is Auxin-binding protein 5 (ABP5) (Zea mays (Maize)).